A 171-amino-acid polypeptide reads, in one-letter code: Peptide deformylase 1 (171 aa).

Fe cation contacts are provided by Cys99 and His141. Residue Glu142 is part of the active site. Residue His145 coordinates Fe cation.

The protein belongs to the polypeptide deformylase family. It depends on Fe(2+) as a cofactor.

The enzyme catalyses N-terminal N-formyl-L-methionyl-[peptide] + H2O = N-terminal L-methionyl-[peptide] + formate. Its function is as follows. Removes the formyl group from the N-terminal Met of newly synthesized proteins. Requires at least a dipeptide for an efficient rate of reaction. N-terminal L-methionine is a prerequisite for activity but the enzyme has broad specificity at other positions. The chain is Peptide deformylase 1 from Xanthomonas campestris pv. campestris (strain ATCC 33913 / DSM 3586 / NCPPB 528 / LMG 568 / P 25).